Reading from the N-terminus, the 416-residue chain is Gamma-glutamyl phosphate reductase (416 aa).

The protein belongs to the gamma-glutamyl phosphate reductase family.

It is found in the cytoplasm. The catalysed reaction is L-glutamate 5-semialdehyde + phosphate + NADP(+) = L-glutamyl 5-phosphate + NADPH + H(+). It participates in amino-acid biosynthesis; L-proline biosynthesis; L-glutamate 5-semialdehyde from L-glutamate: step 2/2. Functionally, catalyzes the NADPH-dependent reduction of L-glutamate 5-phosphate into L-glutamate 5-semialdehyde and phosphate. The product spontaneously undergoes cyclization to form 1-pyrroline-5-carboxylate. The chain is Gamma-glutamyl phosphate reductase from Vibrio atlanticus (strain LGP32) (Vibrio splendidus (strain Mel32)).